The sequence spans 409 residues: Menaquinone reductase (409 aa).

FAD is bound by residues Gly11–Ala15, Cys44–Gly47, Arg101, Val125, Asp288, and Gly300–Ile301.

It belongs to the geranylgeranyl reductase family. The cofactor is FAD.

It carries out the reaction menaquinone-9 + AH2 = beta-dihydromenaquinone-9 + A. It functions in the pathway quinol/quinone metabolism; menaquinone biosynthesis. Its function is as follows. Catalyzes the reduction of a single double bond in the isoprenoid tail of menaquinone (MK-9) in M.smegmatis, likely the beta-isoprene unit, forming the predominant form of menaquinone found in mycobacteria, MK-9(II-H2). This Mycolicibacterium smegmatis (strain ATCC 700084 / mc(2)155) (Mycobacterium smegmatis) protein is Menaquinone reductase.